We begin with the raw amino-acid sequence, 198 residues long: Pyridoxine/pyridoxamine 5'-phosphate oxidase 2 (198 aa).

FMN-binding positions include R42, 59 to 60 (NT), K66, and 121 to 122 (RS).

The protein belongs to the pyridoxamine 5'-phosphate oxidase family. As to quaternary structure, homodimer. FMN is required as a cofactor.

The enzyme catalyses pyridoxamine 5'-phosphate + O2 + H2O = pyridoxal 5'-phosphate + H2O2 + NH4(+). The catalysed reaction is pyridoxine 5'-phosphate + O2 = pyridoxal 5'-phosphate + H2O2. It functions in the pathway cofactor metabolism; pyridoxal 5'-phosphate salvage; pyridoxal 5'-phosphate from pyridoxamine 5'-phosphate: step 1/1. Its pathway is cofactor metabolism; pyridoxal 5'-phosphate salvage; pyridoxal 5'-phosphate from pyridoxine 5'-phosphate: step 1/1. Its function is as follows. Catalyzes the oxidation of either pyridoxine 5'-phosphate (PNP) or pyridoxamine 5'-phosphate (PMP) into pyridoxal 5'-phosphate (PLP). Has an in vitro catalytic efficiency for PNP approximately 300-fold lower than that of PPOX1. The protein is Pyridoxine/pyridoxamine 5'-phosphate oxidase 2 (PPOX2) of Arabidopsis thaliana (Mouse-ear cress).